Reading from the N-terminus, the 235-residue chain is UPF0502 protein Bcep18194_B0081 (235 aa).

This sequence belongs to the UPF0502 family.

The chain is UPF0502 protein Bcep18194_B0081 from Burkholderia lata (strain ATCC 17760 / DSM 23089 / LMG 22485 / NCIMB 9086 / R18194 / 383).